A 520-amino-acid polypeptide reads, in one-letter code: Probable methylmalonate-semialdehyde/malonate-semialdehyde dehydrogenase [acylating], mitochondrial (520 aa).

The NAD(+) site is built by Ala169, Phe171, Lys195, Glu198, Arg199, and Ser248. Cys303 acts as the Nucleophile in catalysis. Glu403 provides a ligand contact to NAD(+).

The protein belongs to the aldehyde dehydrogenase family. As to quaternary structure, homotetramer.

The protein resides in the mitochondrion. The catalysed reaction is 2-methyl-3-oxopropanoate + NAD(+) + CoA + H2O = propanoyl-CoA + hydrogencarbonate + NADH + H(+). It catalyses the reaction 3-oxopropanoate + NAD(+) + CoA + H2O = hydrogencarbonate + acetyl-CoA + NADH + H(+). In terms of biological role, probable malonate and methylmalonate semialdehyde dehydrogenase involved in the catabolism of valine, thymine, and compounds catabolized by way of beta-alanine, including uracil and cytidine. The protein is Probable methylmalonate-semialdehyde/malonate-semialdehyde dehydrogenase [acylating], mitochondrial of Drosophila melanogaster (Fruit fly).